The sequence spans 676 residues: Rho guanine nucleotide exchange factor 37 (676 aa).

Positions 1–26 (MADFETDEASSKSESPEQEGQGSEDK) are disordered. Residues 30–213 (HQRLAIRELI…QDVNSNINEY (184 aa)) enclose the DH domain. The BAR domain occupies 254–455 (LKQEAGLVPR…LPHRHVSEPD (202 aa)). 2 SH3 domains span residues 506–569 (GPGK…LYHP) and 603–666 (PTMS…RTPS). Disordered stretches follow at residues 568–601 (HPIN…SVPT) and 657–676 (PSNF…NLPS).

In terms of biological role, may act as a guanine nucleotide exchange factor (GEF). This is Rho guanine nucleotide exchange factor 37 (Arhgef37) from Rattus norvegicus (Rat).